A 272-amino-acid polypeptide reads, in one-letter code: 4-hydroxy-tetrahydrodipicolinate reductase (272 aa).

NAD(+) contacts are provided by residues Gly-12 to Met-17 and Glu-38. Arg-39 provides a ligand contact to NADP(+). NAD(+) contacts are provided by residues Gly-102–Thr-104 and Ser-126–Met-129. The active-site Proton donor/acceptor is the His-160. His-161 is a (S)-2,3,4,5-tetrahydrodipicolinate binding site. Lys-164 serves as the catalytic Proton donor. Position 170-171 (Gly-170–Thr-171) interacts with (S)-2,3,4,5-tetrahydrodipicolinate.

This sequence belongs to the DapB family.

Its subcellular location is the cytoplasm. The enzyme catalyses (S)-2,3,4,5-tetrahydrodipicolinate + NAD(+) + H2O = (2S,4S)-4-hydroxy-2,3,4,5-tetrahydrodipicolinate + NADH + H(+). It catalyses the reaction (S)-2,3,4,5-tetrahydrodipicolinate + NADP(+) + H2O = (2S,4S)-4-hydroxy-2,3,4,5-tetrahydrodipicolinate + NADPH + H(+). It functions in the pathway amino-acid biosynthesis; L-lysine biosynthesis via DAP pathway; (S)-tetrahydrodipicolinate from L-aspartate: step 4/4. Functionally, catalyzes the conversion of 4-hydroxy-tetrahydrodipicolinate (HTPA) to tetrahydrodipicolinate. The sequence is that of 4-hydroxy-tetrahydrodipicolinate reductase from Sinorhizobium medicae (strain WSM419) (Ensifer medicae).